We begin with the raw amino-acid sequence, 203 residues long: Endo-type membrane-bound lytic murein transglycosylase A (203 aa).

Residues 1–15 (MKLRWFAFLIVLLAG) form the signal peptide. Cysteine 16 carries the N-palmitoyl cysteine lipid modification. Cysteine 16 carries S-diacylglycerol cysteine lipidation.

This sequence belongs to the transglycosylase Slt family.

Its subcellular location is the cell outer membrane. It catalyses the reaction Endolytic cleavage of the (1-&gt;4)-beta-glycosidic linkage between N-acetylmuramic acid (MurNAc) and N-acetylglucosamine (GlcNAc) residues in peptidoglycan with concomitant formation of a 1,6-anhydrobond in the MurNAc residue.. Murein-degrading enzyme. May play a role in recycling of muropeptides during cell elongation and/or cell division. Preferentially cleaves at a distance of more than two disaccharide units from the ends of the glycan chain. This chain is Endo-type membrane-bound lytic murein transglycosylase A, found in Escherichia coli O1:K1 / APEC.